We begin with the raw amino-acid sequence, 370 residues long: Ubiquitin carboxyl-terminal hydrolase 12 (370 aa).

Residues 1-4 carry the Required for plasma membrane localization of USP12/WDR20 motif; it reads MEIL. In terms of domain architecture, USP spans 39–369; that stretch reads FGLVNFGNTC…SGYILFYQSR (331 aa). The active-site Nucleophile is the Cys-48. A disordered region spans residues 145–169; it reads KQEKQNGRLPNGNIDNENNNSTPDP. Over residues 157-168 the composition is skewed to polar residues; that stretch reads NIDNENNNSTPD. Positions 186, 189, 233, and 236 each coordinate Zn(2+). His-317 acts as the Proton acceptor in catalysis.

This sequence belongs to the peptidase C19 family. USP12/USP46 subfamily. Interacts with WDR48. Interacts with WDR20; this interaction promotes translocation of the USP12 complex to the plasma membrane. Component of the USP12-WDR20-WDR48 deubiquitinating complex. Component of the USP12-DMWD-WDR48 deubiquitinating complex. Interacts with PHLPP1. Interacts with RBPJ. Interacts with CBP; this interaction blocks the acetyltransferase activity of CREBBP. Interacts with ITCH; the interaction is more efficient when both USP12 and WDR48/UAF1 are involved and may mediate recruitment of the USP12 deubiquitinating complex to Notch. Interacts with OPTN and SQSTM1/p62; the interaction is independent of deubiquitinase activity and may be involved in regulation of autophagic flux. In terms of assembly, (Microbial infection) Interacts with Epstein-Barr virus protein EBNA3.

Its subcellular location is the nucleus. The protein resides in the cytoplasm. It is found in the cell membrane. The catalysed reaction is Thiol-dependent hydrolysis of ester, thioester, amide, peptide and isopeptide bonds formed by the C-terminal Gly of ubiquitin (a 76-residue protein attached to proteins as an intracellular targeting signal).. With respect to regulation, activated by interaction with WDR20, WDR48 and DMWD through different allosteric mechanisms. Deubiquitinating enzyme that plays various roles in the regulation of the immune response and inflammation. During TCR engagement and activation, translocates into the cytoplasm and deubiquitinates its substrates LAT and TRAT1 and prevents their lysosome-dependent degradation to stabilize the TCR signaling complex at the plasma membrane. Plays an essential role in the selective LPS-induced macrophage response through the activation of NF-kappa-B pathway. In addition, promotes that antiviral immune response through targeting DNA sensor IFI16 to inhibit its proteasome-dependent degradation. Participates in the interferon signaling pathway and antiviral response independently of its deubiquitinase activity by maintaining nuclear phosphorylated STAT1 levels via inhibition of its CREBBP-mediated acetylation and subsequent dephosphorylation. Plays an intrinsic role in promoting the differentiation, activation and proliferation of CD4(+) T-cell by activating the NF-kappa-B signaling pathway through deubiquitinating and stabilizing B-cell lymphoma/leukemia 10/BCL10. In myeloid-derived suppressor cells promotes the activation of the NF-kappa-B via deubiquitination and stabilization of RELA. Regulates the 'Lys-63'-linked polyubiquitin chains of BAX and thereby modulates the mitochondrial apoptotic process. Negative regulator of NOTCH signaling that specifically deubiquitinates non-activated NOTCH receptors to target them for lysosomal degradation; deubiquitination of NOTCH stimulates its transport form late endosomes to lysosomes. Protects neurons against HTT/huntingtin-induced polyglutamine expansion-dependent neurodegeneration through regulation of autophagic flux. This function is independent of deubiquitinase activity or of other components of the USP12-WDR20-WDR48 deubiquitinating complex. In complex with WDR48, acts as a potential tumor suppressor by positively regulating PHLPP1 stability. Its function is as follows. (Microbial infection) Forms a complex with Epstein-Barr virus protein EBNA3 which is an active deubiquitinase activity that may select specific substrates to promote B-lymphocyte transformation. The sequence is that of Ubiquitin carboxyl-terminal hydrolase 12 (USP12) from Homo sapiens (Human).